The sequence spans 192 residues: Elongation factor P (192 aa).

The protein belongs to the elongation factor P family.

The protein resides in the cytoplasm. It functions in the pathway protein biosynthesis; polypeptide chain elongation. In terms of biological role, involved in peptide bond synthesis. Stimulates efficient translation and peptide-bond synthesis on native or reconstituted 70S ribosomes in vitro. Probably functions indirectly by altering the affinity of the ribosome for aminoacyl-tRNA, thus increasing their reactivity as acceptors for peptidyl transferase. The chain is Elongation factor P from Borrelia duttonii (strain Ly).